Reading from the N-terminus, the 753-residue chain is Polyribonucleotide nucleotidyltransferase (753 aa).

Residues aspartate 523 and aspartate 529 each contribute to the Mg(2+) site. Residues proline 589 to valine 648 form the KH domain. In terms of domain architecture, S1 motif spans glycine 660–valine 732. Residues glycine 733–alanine 753 form a disordered region.

It belongs to the polyribonucleotide nucleotidyltransferase family. Requires Mg(2+) as cofactor.

It is found in the cytoplasm. The enzyme catalyses RNA(n+1) + phosphate = RNA(n) + a ribonucleoside 5'-diphosphate. Involved in mRNA degradation. Catalyzes the phosphorolysis of single-stranded polyribonucleotides processively in the 3'- to 5'-direction. The protein is Polyribonucleotide nucleotidyltransferase of Micrococcus luteus (strain ATCC 4698 / DSM 20030 / JCM 1464 / CCM 169 / CCUG 5858 / IAM 1056 / NBRC 3333 / NCIMB 9278 / NCTC 2665 / VKM Ac-2230) (Micrococcus lysodeikticus).